Here is a 234-residue protein sequence, read N- to C-terminus: Sugar fermentation stimulation protein A (234 aa).

A DNA-binding region (H-T-H motif) is located at residues 201–220; it reads LLSEAQNKGVEVLAYKAELS.

This sequence belongs to the SfsA family.

Its function is as follows. Binds to DNA non-specifically. Could be a regulatory factor involved in maltose metabolism. This chain is Sugar fermentation stimulation protein A, found in Salmonella choleraesuis (strain SC-B67).